We begin with the raw amino-acid sequence, 556 residues long: Arginine--tRNA ligase (556 aa).

The 'HIGH' region motif lies at 132–142 (VNPTGDLHLGH).

It belongs to the class-I aminoacyl-tRNA synthetase family. As to quaternary structure, monomer.

The protein localises to the cytoplasm. The enzyme catalyses tRNA(Arg) + L-arginine + ATP = L-arginyl-tRNA(Arg) + AMP + diphosphate. In Oceanobacillus iheyensis (strain DSM 14371 / CIP 107618 / JCM 11309 / KCTC 3954 / HTE831), this protein is Arginine--tRNA ligase.